Here is a 312-residue protein sequence, read N- to C-terminus: Aspartate carbamoyltransferase catalytic subunit (312 aa).

Carbamoyl phosphate is bound by residues Arg58 and Thr59. Lys86 serves as a coordination point for L-aspartate. Carbamoyl phosphate-binding residues include Arg108, His136, and Gln139. L-aspartate-binding residues include Arg169 and Arg223. Carbamoyl phosphate is bound by residues Gly264 and Pro265.

The protein belongs to the aspartate/ornithine carbamoyltransferase superfamily. ATCase family. Heterododecamer (2C3:3R2) of six catalytic PyrB chains organized as two trimers (C3), and six regulatory PyrI chains organized as three dimers (R2).

It catalyses the reaction carbamoyl phosphate + L-aspartate = N-carbamoyl-L-aspartate + phosphate + H(+). The protein operates within pyrimidine metabolism; UMP biosynthesis via de novo pathway; (S)-dihydroorotate from bicarbonate: step 2/3. In terms of biological role, catalyzes the condensation of carbamoyl phosphate and aspartate to form carbamoyl aspartate and inorganic phosphate, the committed step in the de novo pyrimidine nucleotide biosynthesis pathway. The sequence is that of Aspartate carbamoyltransferase catalytic subunit from Endomicrobium trichonymphae.